A 349-amino-acid chain; its full sequence is Ureidoglycolate dehydrogenase (NAD(+)) (349 aa).

The Proton acceptor role is filled by His-116. NAD(+)-binding positions include Ser-140, 174–176, Lys-224, and 306–308; these read DMA and GQD.

The protein belongs to the LDH2/MDH2 oxidoreductase family. As to quaternary structure, homodimer.

It localises to the cytoplasm. It catalyses the reaction (S)-ureidoglycolate + NAD(+) = N-carbamoyl-2-oxoglycine + NADH + H(+). It participates in nitrogen metabolism; (S)-allantoin degradation; oxalurate from (S)-ureidoglycolate: step 1/1. Its function is as follows. AllD plays a pivotal role as a metabolic branch-point enzyme in nitrogen utilization via the assimilation of allantoin. It is able to utilize allantoin as a sole source of nitrogen under anaerobic conditions. Catalyzes the oxidation of ureidoglycolate to oxalurate. The polypeptide is Ureidoglycolate dehydrogenase (NAD(+)) (Escherichia coli O157:H7).